Consider the following 509-residue polypeptide: 2,3-bisphosphoglycerate-independent phosphoglycerate mutase (509 aa).

Mn(2+) is bound by residues Asp-14 and Ser-64. Ser-64 (phosphoserine intermediate) is an active-site residue. Residues His-125, 155–156 (RD), Arg-187, Arg-193, 259–262 (RADR), and Lys-332 each bind substrate. Mn(2+) is bound by residues Asp-399, His-403, Asp-440, His-441, and His-459.

This sequence belongs to the BPG-independent phosphoglycerate mutase family. As to quaternary structure, monomer. The cofactor is Mn(2+).

The enzyme catalyses (2R)-2-phosphoglycerate = (2R)-3-phosphoglycerate. It participates in carbohydrate degradation; glycolysis; pyruvate from D-glyceraldehyde 3-phosphate: step 3/5. In terms of biological role, catalyzes the interconversion of 2-phosphoglycerate and 3-phosphoglycerate. The chain is 2,3-bisphosphoglycerate-independent phosphoglycerate mutase from Psychromonas ingrahamii (strain DSM 17664 / CCUG 51855 / 37).